Reading from the N-terminus, the 242-residue chain is Large ribosomal subunit protein uL3 (242 aa).

At Gln151 the chain carries N5-methylglutamine.

It belongs to the universal ribosomal protein uL3 family. Part of the 50S ribosomal subunit. Forms a cluster with proteins L14 and L19. In terms of processing, methylated by PrmB.

Its function is as follows. One of the primary rRNA binding proteins, it binds directly near the 3'-end of the 23S rRNA, where it nucleates assembly of the 50S subunit. The chain is Large ribosomal subunit protein uL3 from Zymomonas mobilis subsp. mobilis (strain ATCC 31821 / ZM4 / CP4).